Reading from the N-terminus, the 178-residue chain is Oligoribonuclease (178 aa).

An Exonuclease domain is found at 7-168 (LIWIDLEMTG…DDIRESIAEL (162 aa)). Residue Y128 is part of the active site.

The protein belongs to the oligoribonuclease family.

The protein localises to the cytoplasm. In terms of biological role, 3'-to-5' exoribonuclease specific for small oligoribonucleotides. The chain is Oligoribonuclease from Francisella tularensis subsp. novicida (strain U112).